The primary structure comprises 650 residues: Phosphatidylinositol 4-kinase gamma 7 (650 aa).

In terms of domain architecture, Ubiquitin-like; degenerate spans 46-103 (RRVFVQTETGCVLGMELDRSDNVHTVKRRLQIALNFPTEESSLTYGDMVLTNDLSAVR). The 298-residue stretch at 166 to 463 (GVEPLPVHSG…SVTERDVFSP (298 aa)) folds into the PI3K/PI4K catalytic domain. A G-loop region spans residues 172 to 178 (VHSGLGG). Residues 173–179 (HSGLGGA), lysine 194, and 283–286 (QKFV) each bind ATP. The tract at residues 316–324 (FNTDRHGGN) is catalytic loop. Residues 343–369 (PIDHGLCLPETLEDPYFEWIHWPQASL) are activation loop. Aspartate 345 contacts ATP. 2 disordered regions span residues 508–534 (SLGK…ENTV) and 560–595 (STSM…KSAN). Positions 516 to 529 (IKEEEEDEEEEEDK) are enriched in acidic residues. Polar residues-rich tracts occupy residues 560–569 (STSMKNTHLS) and 585–595 (ENTSSGHKSAN). Serine 593 carries the post-translational modification Phosphoserine.

The protein belongs to the PI3/PI4-kinase family. Type II PI4K subfamily.

The enzyme catalyses a 1,2-diacyl-sn-glycero-3-phospho-(1D-myo-inositol) + ATP = a 1,2-diacyl-sn-glycero-3-phospho-(1D-myo-inositol 4-phosphate) + ADP + H(+). In terms of biological role, the phosphorylation of phosphatidylinositol (PI) to PI4P is the first committed step in the generation of phosphatidylinositol 4,5-bisphosphate (PIP2), a precursor of the second messenger inositol 1,4,5-trisphosphate (InsP3). Undergoes autophosphorylation and phosphorylates serine/threonine residues of protein substrates. In Arabidopsis thaliana (Mouse-ear cress), this protein is Phosphatidylinositol 4-kinase gamma 7.